The primary structure comprises 1080 residues: Presequence protease 2, chloroplastic/mitochondrial (1080 aa).

A chloroplast and mitochondrion-targeting transit peptide spans 1–84 (MLRSLTCSST…NGQFSRLSIR (84 aa)). His-161 contributes to the Zn(2+) binding site. Residue Glu-164 is the Proton acceptor of the active site. His-165 is a binding site for Zn(2+). Glu-239 is an active-site residue. Glu-261 contacts Zn(2+). A Mg(2+)-binding site is contributed by Arg-704.

The protein belongs to the peptidase M16 family. PreP subfamily. In terms of assembly, homodimer. Zn(2+) is required as a cofactor. The cofactor is Mg(2+). As to expression, expressed in leaves, flowers and roots, but not detected in siliques and shoots.

Its subcellular location is the plastid. The protein resides in the chloroplast stroma. The protein localises to the mitochondrion matrix. Completely inhibited by the metal chelator orthophenanthroline. Its function is as follows. ATP-independent protease that degrades both mitochondrial and chloroplastic transit peptides after their cleavage. Also degrades other unstructured peptides. Specific for peptides in the range of 10 to 65 residues. Shows a preference for cleavage after small polar residues and before basic residues, but without any positional preference. The protein is Presequence protease 2, chloroplastic/mitochondrial (PREP2) of Arabidopsis thaliana (Mouse-ear cress).